Reading from the N-terminus, the 238-residue chain is uncharacterized protein (238 aa).

A helical transmembrane segment spans residues 10 to 33 (TLLALMISLSLSSLLLLSISHFYV).

Its subcellular location is the membrane. This is an uncharacterized protein from Haemophilus influenzae (strain ATCC 51907 / DSM 11121 / KW20 / Rd).